The chain runs to 305 residues: tRNA pseudouridine synthase B (305 aa).

Catalysis depends on Asp38, which acts as the Nucleophile.

This sequence belongs to the pseudouridine synthase TruB family. Type 1 subfamily.

The catalysed reaction is uridine(55) in tRNA = pseudouridine(55) in tRNA. Its function is as follows. Responsible for synthesis of pseudouridine from uracil-55 in the psi GC loop of transfer RNAs. This Latilactobacillus sakei subsp. sakei (strain 23K) (Lactobacillus sakei subsp. sakei) protein is tRNA pseudouridine synthase B.